Here is a 1927-residue protein sequence, read N- to C-terminus: Integrin beta-like protein A (1927 aa).

A signal peptide spans 1-20 (MNRILTLFILFISLFIVCEA). Residues 21 to 1860 (THFRFGTMSW…KENNNKTVLT (1840 aa)) are Extracellular-facing. N-linked (GlcNAc...) asparagine glycosylation is present at N309. Positions 425–462 (YGEKCDPVDPCVNGESNEGSQGNGKCTCYYGWEGKNCD) constitute an EGF-like domain. 2 disulfides stabilise this stretch: C435–C450 and C452–C461. The region spanning 522–709 (EVLVLVDSQP…VLSKAVVKAI (188 aa)) is the VWFA domain. N-linked (GlcNAc...) asparagine glycosylation is found at N1122, N1516, N1717, N1723, and N1855. A helical membrane pass occupies residues 1861–1881 (GAIAGAAAGAGLLAAGAWFLL). At 1882-1927 (KKSAPPTDAFFGEGAFADGAVSTNPMYEESGRSAINPLYEASSENL) the chain is on the cytoplasmic side.

This sequence belongs to the SIB family. As to quaternary structure, interacts with talA/talin.

It localises to the membrane. Implicated in cellular adhesion to substrate or phagocytic particles. The polypeptide is Integrin beta-like protein A (sibA) (Dictyostelium discoideum (Social amoeba)).